Consider the following 296-residue polypeptide: N-acetylmuramic acid 6-phosphate etherase 2 (296 aa).

An SIS domain is found at 55–218; it reads IIKSFNQGGR…STISMIGIGK (164 aa). Glu83 serves as the catalytic Proton donor. Glu114 is an active-site residue.

The protein belongs to the GCKR-like family. MurNAc-6-P etherase subfamily. In terms of assembly, homodimer.

It catalyses the reaction N-acetyl-D-muramate 6-phosphate + H2O = N-acetyl-D-glucosamine 6-phosphate + (R)-lactate. The protein operates within amino-sugar metabolism; N-acetylmuramate degradation. In terms of biological role, specifically catalyzes the cleavage of the D-lactyl ether substituent of MurNAc 6-phosphate, producing GlcNAc 6-phosphate and D-lactate. This Enterococcus faecalis (strain ATCC 700802 / V583) protein is N-acetylmuramic acid 6-phosphate etherase 2.